A 198-amino-acid chain; its full sequence is Recombination protein RecR (198 aa).

A C4-type zinc finger spans residues 57–72; that stretch reads CSICGNLTESDPCAIC. One can recognise a Toprim domain in the interval 80–175; that stretch reads TTILVVEESK…KVTRLARGLA (96 aa).

The protein belongs to the RecR family.

Functionally, may play a role in DNA repair. It seems to be involved in an RecBC-independent recombinational process of DNA repair. It may act with RecF and RecO. The protein is Recombination protein RecR of Lactococcus lactis subsp. lactis (strain IL1403) (Streptococcus lactis).